The sequence spans 305 residues: Mat- sexual cell fertilization-promoting factor (305 aa).

The alpha box DNA-binding region spans 38-93 (PAKKKVNGFMGYRSYYSSMFSQLPQKERSPILTTLWQQDPFHKEWDFMCAVYSAIR).

This sequence belongs to the MATALPHA1 family.

It localises to the nucleus. Its function is as follows. Controls fertilization, probably by determining the mating type. May be involved in the post-fertilization steps of the sexual cycle besides mat+. It is required for the developmental events that occur in the female organ after fertilization. The chain is Mat- sexual cell fertilization-promoting factor (FMR1) from Podospora anserina (Pleurage anserina).